Here is a 357-residue protein sequence, read N- to C-terminus: Probable cinnamyl alcohol dehydrogenase (357 aa).

Cys47 lines the Zn(2+) pocket. Ser49 serves as a coordination point for NADP(+). Zn(2+)-binding residues include His69, Glu70, Cys100, Cys103, Cys106, Cys114, and Cys163. NADP(+) contacts are provided by residues Thr167, 188–193 (GLGGVG), 211–216 (SSSDKK), Thr251, Gly275, and 298–300 (SFI).

The protein belongs to the zinc-containing alcohol dehydrogenase family. Homodimer. Requires Zn(2+) as cofactor.

It carries out the reaction (E)-cinnamyl alcohol + NADP(+) = (E)-cinnamaldehyde + NADPH + H(+). It catalyses the reaction (E)-coniferol + NADP(+) = (E)-coniferaldehyde + NADPH + H(+). The enzyme catalyses (E)-sinapyl alcohol + NADP(+) = (E)-sinapaldehyde + NADPH + H(+). The catalysed reaction is (E)-4-coumaroyl alcohol + NADP(+) = (E)-4-coumaraldehyde + NADPH + H(+). It carries out the reaction (E)-caffeyl alcohol + NADP(+) = (E)-caffeyl aldehyde + NADPH + H(+). The protein operates within aromatic compound metabolism; phenylpropanoid biosynthesis. Involved in lignin biosynthesis. Catalyzes the final step specific for the production of lignin monomers. Catalyzes the NADPH-dependent reduction of coniferaldehyde, 5-hydroxyconiferaldehyde, sinapaldehyde, 4-coumaraldehyde and caffeyl aldehyde to their respective alcohols. This is Probable cinnamyl alcohol dehydrogenase from Pinus taeda (Loblolly pine).